Reading from the N-terminus, the 149-residue chain is Transcriptional repressor NrdR (149 aa).

Residues 3–34 (CPFCDTEETKVIDSRLVSDGYQVRRRRECGHC) fold into a zinc finger. The ATP-cone domain maps to 49–139 (PKIIKTDGTR…VYLSFDDIDQ (91 aa)).

It belongs to the NrdR family. Requires Zn(2+) as cofactor.

Its function is as follows. Negatively regulates transcription of bacterial ribonucleotide reductase nrd genes and operons by binding to NrdR-boxes. This chain is Transcriptional repressor NrdR, found in Haemophilus influenzae (strain 86-028NP).